The following is a 352-amino-acid chain: tRNA pseudouridine synthase D (352 aa).

The Nucleophile role is filled by D81. The region spanning G157–L303 is the TRUD domain.

It belongs to the pseudouridine synthase TruD family.

It carries out the reaction uridine(13) in tRNA = pseudouridine(13) in tRNA. Its function is as follows. Responsible for synthesis of pseudouridine from uracil-13 in transfer RNAs. In Pseudomonas entomophila (strain L48), this protein is tRNA pseudouridine synthase D.